The following is a 965-amino-acid chain: Collagenase ColQ1 (965 aa).

Residues 1-30 (MNKKSKINKVMLSISTMALSLGALQAPASA) form the signal peptide. Residues 31-93 (EEKVPYNVLK…KAAVKQVKES (63 aa)) constitute a propeptide that is removed on maturation. The activator domain stretch occupies residues 94–366 (YSMADLNKMN…AVEQITTNYN (273 aa)). The S1 metalloprotease domain stretch occupies residues 94 to 765 (YSMADLNKMN…VFHGIAKDDG (672 aa)). The segment at 376–645 (DLEKIRKEGK…MQQLIDNQDK (270 aa)) is catalytic subdomain. Zn(2+) is bound at residue His501. Glu502 is a catalytic residue. Zn(2+)-binding residues include His505 and Glu533. The tract at residues 653-765 (DDYLAEHAPK…VFHGIAKDDG (113 aa)) is helper subdomain. A PKD domain is found at 769-850 (APTVNINGPY…ESKSETTVTV (82 aa)). The interval 842–867 (SKSETTVTVKDGSLTESEPNNRPEEA) is disordered. Over residues 845 to 859 (ETTVTVKDGSLTESE) the composition is skewed to polar residues. The collagen-binding domain stretch occupies residues 853–965 (GSLTESEPNN…GDGTYKLSVK (113 aa)).

The protein belongs to the peptidase M9B family. Collagenase subfamily. Ca(2+) is required as a cofactor. It depends on Zn(2+) as a cofactor.

The protein localises to the secreted. It carries out the reaction Digestion of native collagen in the triple helical region at Xaa-|-Gly bonds. With synthetic peptides, a preference is shown for Gly at P3 and P1', Pro and Ala at P2 and P2', and hydroxyproline, Ala or Arg at P3'.. Strongly inhibited by EDTA. Not inhibited by E-64 and PMSF, broad-spectrum cysteine and serine protease inhibitors. Acts as a true collagenase, which is highly active and cleaves natively folded collagen. In vitro, can also cleave gelatin and the synthetic peptide FALGPA (furylacryloyl-Leu-Gly-Pro-Ala). Causes damage on dermal collagen (COL), resulting in gaps in the tissue, which might lead to an accelerated bacterial infiltration and penetration into deeper sites of the host. The protein is Collagenase ColQ1 of Bacillus cereus (strain Q1).